A 184-amino-acid polypeptide reads, in one-letter code: dCTP deaminase (184 aa).

DCTP is bound at residue 107–112; sequence KSTYAR. Glutamate 133 serves as the catalytic Proton donor/acceptor. DCTP is bound by residues glutamine 152, tyrosine 166, and glutamine 176.

This sequence belongs to the dCTP deaminase family. Homotrimer.

It carries out the reaction dCTP + H2O + H(+) = dUTP + NH4(+). The protein operates within pyrimidine metabolism; dUMP biosynthesis; dUMP from dCTP (dUTP route): step 1/2. Functionally, catalyzes the deamination of dCTP to dUTP. This is dCTP deaminase from Acidiphilium cryptum (strain JF-5).